The primary structure comprises 824 residues: Vesicle-fusing ATPase (824 aa).

ATP is bound by residues 582–587 (RGMIVW) and 622–629 (AKTGKTSL). A Mg(2+)-binding site is contributed by threonine 627.

The protein belongs to the AAA ATPase family. As to quaternary structure, homohexamer. It depends on Mg(2+) as a cofactor.

The protein localises to the cytoplasm. The enzyme catalyses ATP + H2O = ADP + phosphate + H(+). Functionally, required for vesicle-mediated transport. Catalyzes the fusion of transport vesicles within the Golgi cisternae. Is also required for transport from the endoplasmic reticulum to the Golgi stack. Seems to function as a fusion protein required for the delivery of cargo proteins to all compartments of the Golgi stack independent of vesicle origin. In Caenorhabditis elegans, this protein is Vesicle-fusing ATPase (nsf-1).